The primary structure comprises 366 residues: Putative F-box protein At3g13624 (366 aa).

The region spanning 1 to 51 is the F-box domain; it reads MTTISDLPEDVVEEILPRVPLTSLSAVRSICKTWNTLSKNRVLCKAAVKKQ.

This chain is Putative F-box protein At3g13624, found in Arabidopsis thaliana (Mouse-ear cress).